A 59-amino-acid polypeptide reads, in one-letter code: Large ribosomal subunit protein bL32B (59 aa).

This sequence belongs to the bacterial ribosomal protein bL32 family.

In Enterococcus faecalis (strain ATCC 700802 / V583), this protein is Large ribosomal subunit protein bL32B (rpmF2).